We begin with the raw amino-acid sequence, 226 residues long: Isoprenyl transferase (226 aa).

Asp12 is an active-site residue. Asp12 lines the Mg(2+) pocket. Substrate contacts are provided by residues 13-16 (GNAR), Trp17, Lys25, His29, and 57-59 (SFE). Asn60 serves as the catalytic Proton acceptor. Residues Trp61, Arg63, Arg174, and 180-182 (RIS) each bind substrate. Residue Glu193 coordinates Mg(2+).

It belongs to the UPP synthase family. Homodimer. Mg(2+) serves as cofactor.

Its function is as follows. Catalyzes the condensation of isopentenyl diphosphate (IPP) with allylic pyrophosphates generating different type of terpenoids. The polypeptide is Isoprenyl transferase (Rickettsia prowazekii (strain Madrid E)).